Reading from the N-terminus, the 166-residue chain is Transcription antitermination protein NusB (166 aa).

Residues 1 to 18 (MISDESDRFNPRDPKPAD) are compositionally biased toward basic and acidic residues. Residues 1–28 (MISDESDRFNPRDPKPADAGKPSKSAKR) form a disordered region.

The protein belongs to the NusB family.

In terms of biological role, involved in transcription antitermination. Required for transcription of ribosomal RNA (rRNA) genes. Binds specifically to the boxA antiterminator sequence of the ribosomal RNA (rrn) operons. The protein is Transcription antitermination protein NusB of Pseudomonas putida (strain W619).